We begin with the raw amino-acid sequence, 183 residues long: NAD(P)H-quinone oxidoreductase subunit J (183 aa).

Residues 1 to 21 (MAEENAQEKQAPPSAGEQSEP) form a disordered region.

This sequence belongs to the complex I 30 kDa subunit family. As to quaternary structure, NDH-1 can be composed of about 15 different subunits; different subcomplexes with different compositions have been identified which probably have different functions.

It localises to the cellular thylakoid membrane. The catalysed reaction is a plastoquinone + NADH + (n+1) H(+)(in) = a plastoquinol + NAD(+) + n H(+)(out). It carries out the reaction a plastoquinone + NADPH + (n+1) H(+)(in) = a plastoquinol + NADP(+) + n H(+)(out). NDH-1 shuttles electrons from an unknown electron donor, via FMN and iron-sulfur (Fe-S) centers, to quinones in the respiratory and/or the photosynthetic chain. The immediate electron acceptor for the enzyme in this species is believed to be plastoquinone. Couples the redox reaction to proton translocation, and thus conserves the redox energy in a proton gradient. Cyanobacterial NDH-1 also plays a role in inorganic carbon-concentration. The chain is NAD(P)H-quinone oxidoreductase subunit J from Synechococcus sp. (strain JA-2-3B'a(2-13)) (Cyanobacteria bacterium Yellowstone B-Prime).